A 246-amino-acid polypeptide reads, in one-letter code: Major prion protein (246 aa).

An N-terminal signal peptide occupies residues 1-15 (MLVLFVATWSDLGLC). The interaction with GRB2, ERI3 and SYN1 stretch occupies residues 16 to 223 (KKRPKPGGWN…ESQAYYQRGS (208 aa)). The disordered stretch occupies residues 18–102 (RPKPGGWNTG…HKPSKPKTSM (85 aa)). 5 consecutive repeat copies span residues 44–52 (PQGGGGWGQ), 53–60 (PHGGGWGQ), 61–68 (PHGGGWGQ), 69–76 (PHGGGWGQ), and 77–84 (PHGGGWGQ). The 5 X 8 AA tandem repeats of P-H-G-G-G-W-G-Q stretch occupies residues 44 to 84 (PQGGGGWGQPHGGGWGQPHGGGWGQPHGGGWGQPHGGGWGQ). Residues 45 to 88 (QGGGGWGQPHGGGWGQPHGGGWGQPHGGGWGQPHGGGWGQGGGT) are compositionally biased toward gly residues. Residues His-54, Gly-55, Gly-56, His-62, Gly-63, Gly-64, His-70, Gly-71, Gly-72, His-78, Gly-79, and Gly-80 each contribute to the Cu(2+) site. The span at 91-102 (QWHKPSKPKTSM) shows a compositional bias: basic residues. Cysteines 172 and 207 form a disulfide. N-linked (GlcNAc...) asparagine glycans are attached at residues Asn-174 and Asn-190. Ser-223 is lipidated: GPI-anchor amidated serine. Positions 224–246 (SMVLFSSPPVILLISFLIFLIVG) are cleaved as a propeptide — removed in mature form.

This sequence belongs to the prion family. As to quaternary structure, monomer and homodimer. Has a tendency to aggregate into amyloid fibrils containing a cross-beta spine, formed by a steric zipper of superposed beta-strands. Soluble oligomers may represent an intermediate stage on the path to fibril formation. Copper binding may promote oligomerization. Interacts with GRB2, APP, ERI3/PRNPIP and SYN1. Mislocalized cytosolically exposed PrP interacts with MGRN1; this interaction alters MGRN1 subcellular location and causes lysosomal enlargement. Interacts with KIAA1191.

It is found in the cell membrane. The protein resides in the golgi apparatus. In terms of biological role, its primary physiological function is unclear. Has cytoprotective activity against internal or environmental stresses. May play a role in neuronal development and synaptic plasticity. May be required for neuronal myelin sheath maintenance. May play a role in iron uptake and iron homeostasis. Soluble oligomers are toxic to cultured neuroblastoma cells and induce apoptosis (in vitro). Association with GPC1 (via its heparan sulfate chains) targets PRNP to lipid rafts. Also provides Cu(2+) or Zn(2+) for the ascorbate-mediated GPC1 deaminase degradation of its heparan sulfate side chains. The polypeptide is Major prion protein (PRNP) (Cercopithecus mona (Mona monkey)).